A 196-amino-acid polypeptide reads, in one-letter code: Small ribosomal subunit protein uS4c (196 aa).

Residues Ala17–Ser38 are disordered. The span at Lys24–Ser38 shows a compositional bias: basic residues. The S4 RNA-binding domain occupies Met89–Leu169.

Belongs to the universal ribosomal protein uS4 family. As to quaternary structure, part of the 30S ribosomal subunit. Contacts protein S5. The interaction surface between S4 and S5 is involved in control of translational fidelity.

It localises to the plastid. The protein localises to the chloroplast. One of the primary rRNA binding proteins, it binds directly to 16S rRNA where it nucleates assembly of the body of the 30S subunit. In terms of biological role, with S5 and S12 plays an important role in translational accuracy. The sequence is that of Small ribosomal subunit protein uS4c (rps4) from Lygeum spartum.